Reading from the N-terminus, the 513-residue chain is Glutamate--tRNA ligase 2 (513 aa).

A 'HIGH' region motif is present at residues 11–21 (PSPTGFLHIGS). A 'KMSKS' region motif is present at residues 240 to 244 (KLSKR). An ATP-binding site is contributed by lysine 243. Residues 335–383 (NTLLRHLPYREEFGGNTERSTAAYIDIREDASTGLTYKLPLAVELPKKF) form the RPE1 insert domain.

This sequence belongs to the class-I aminoacyl-tRNA synthetase family. Glutamate--tRNA ligase type 1 subfamily. As to quaternary structure, monomer.

The protein resides in the cytoplasm. It carries out the reaction tRNA(Glu) + L-glutamate + ATP = L-glutamyl-tRNA(Glu) + AMP + diphosphate. Its function is as follows. Catalyzes the attachment of glutamate to tRNA(Glu) in a two-step reaction: glutamate is first activated by ATP to form Glu-AMP and then transferred to the acceptor end of tRNA(Glu). The chain is Glutamate--tRNA ligase 2 from Rickettsia conorii (strain ATCC VR-613 / Malish 7).